A 1040-amino-acid chain; its full sequence is MQVLPPSSTGGPSRLFIMRPVATTLLMVAILLAGIIGYRALPVSALPEVDYPTIQVVTLYPGASPDVMTSAVTAPLERQFGQMSGLKQMSSQSSGGASVITLQFQLTLPLDVAEQEVQAAINAATNLLPSDLPNPPVYSKVNPADPPIMTLAVTSTAMPMTQVEDMVETRVAQKISQISGVGLVTLSGGQRPAVRVKLNAQAIAALGLTSETVRTAITGANVNSAKGSLDGPSRAVTLSANDQMQSAEEYRQLIIAYQNGAPIRLGDVATVEQGAENSWLGAWANKEQAIVMNVQRQPGANIISTADSIRQMLPQLTESLPKSVKVTVLSDRTTNIRASVDDTQFELMMAIALVVMIIYLFLRNIPATIIPGVAVPLSLIGTFAVMVFLDFSINNLTLMALTIATGFVVDDAIVVIENISRYIEKGEKPLAAALKGAGEIGFTIISLTFSLIAVLIPLLFMGDIVGRLFREFAITLAVAILISAVVSLTLTPMMCARMLSQESLRKQNRFSRASEKMFDRIIAAYGRGLAKVLNHPWLTLSVALSTLLLSVLLWVFIPKGFFPVQDNGIIQGTLQAPQSSSFANMAQRQRQVADVILQDPAVQSLTSFVGVDGTNPSLNSARLQINLKPLDERDDRVQKVIARLQTAVDKVPGVDLFLQPTQDLTIDTQVSRTQYQFTLQATSLDALSTWVPQLMEKLQQLPQLSDVSSDWQDKGLVAYVNVDRDSASRLGISMADVDNALYNAFGQRLISTIYTQANQYRVVLEHNTEITPGLAALDTIRLTSSDGGVVPLSSIAKVEQRFAPLSINHLDQFPVTTISFNVPDNYSLGDAVQAIMDTEKTLNLPVDITTQFQGSTLAFQSALGSTVWLIVAAVVAMYIVLGILYESFIHPITILSTLPTAGVGALLALMIAGSELDVIAIIGIILLIGIVKKNAIMMIDFALAAEREQGMSPRDAIYQACLLRFRPILMTTLAALLGALPLMLSTGVGAELRRPLGIGMVGGLIVSQVLTLFTTPVIYLLFDRLALWTKSRFARHEEEA.

12 helical membrane-spanning segments follow: residues 16–36 (FIMR…AGII), 347–367 (LMMA…NIPA), 369–389 (IIPG…MVFL), 396–416 (LTLM…IVVI), 440–460 (IGFT…PLLF), 472–492 (FAIT…TLTP), 537–557 (WLTL…WVFI), 863–883 (LGST…VLGI), 888–908 (FIHP…ALLA), 911–931 (IAGS…IGIV), 968–988 (ILMT…STGV), and 998–1018 (IGMV…TPVI).

Belongs to the resistance-nodulation-cell division (RND) (TC 2.A.6) family. MdtB subfamily. Part of a tripartite efflux system composed of MdtA, MdtB and MdtC. MdtB forms a heteromultimer with MdtC.

Its subcellular location is the cell inner membrane. Functionally, the MdtABC tripartite complex confers resistance against novobiocin and deoxycholate. This Escherichia coli (strain SE11) protein is Multidrug resistance protein MdtB.